The sequence spans 322 residues: Ferrochelatase (322 aa).

Positions 194 and 275 each coordinate Fe cation.

This sequence belongs to the ferrochelatase family.

The protein localises to the cytoplasm. It carries out the reaction heme b + 2 H(+) = protoporphyrin IX + Fe(2+). Its pathway is porphyrin-containing compound metabolism; protoheme biosynthesis; protoheme from protoporphyrin-IX: step 1/1. Its function is as follows. Catalyzes the ferrous insertion into protoporphyrin IX. The chain is Ferrochelatase from Yersinia enterocolitica.